Reading from the N-terminus, the 140-residue chain is Small ribosomal subunit protein uS19 (140 aa).

Residues 120-140 (RPKHSAPGIGATRSSAHVSKK) form a disordered region. The span at 131-140 (TRSSAHVSKK) shows a compositional bias: polar residues.

This sequence belongs to the universal ribosomal protein uS19 family.

Protein S19 forms a complex with S13 that binds strongly to the 16S ribosomal RNA. This is Small ribosomal subunit protein uS19 from Nanoarchaeum equitans (strain Kin4-M).